Here is a 342-residue protein sequence, read N- to C-terminus: Dihydroorotase (342 aa).

Positions 13 and 15 each coordinate Zn(2+). Residues 15-17 and asparagine 41 contribute to the substrate site; that span reads HLR. Positions 99, 136, and 174 each coordinate Zn(2+). Lysine 99 carries the N6-carboxylysine modification. Histidine 136 lines the substrate pocket. Leucine 218 contacts substrate. Aspartate 246 lines the Zn(2+) pocket. The active site involves aspartate 246. The substrate site is built by histidine 250 and alanine 262.

This sequence belongs to the metallo-dependent hydrolases superfamily. DHOase family. Class II DHOase subfamily. As to quaternary structure, homodimer. The cofactor is Zn(2+).

The enzyme catalyses (S)-dihydroorotate + H2O = N-carbamoyl-L-aspartate + H(+). Its pathway is pyrimidine metabolism; UMP biosynthesis via de novo pathway; (S)-dihydroorotate from bicarbonate: step 3/3. Catalyzes the reversible cyclization of carbamoyl aspartate to dihydroorotate. The sequence is that of Dihydroorotase from Synechocystis sp. (strain ATCC 27184 / PCC 6803 / Kazusa).